The primary structure comprises 488 residues: Signal recognition particle receptor FtsY (488 aa).

Positions 14 to 82 (DTAPEDVSKP…AVPDDAVHGG (69 aa)) are disordered. Residues 32–67 (VGTSSTGSPVGTGAAMPAAQDAPSPAAPHAIATPDD) are compositionally biased toward low complexity. Residues 287–294 (GVNGVGKT), 369–373 (DTAGR), and 433–436 (TKLD) contribute to the GTP site.

The protein belongs to the GTP-binding SRP family. FtsY subfamily. In terms of assembly, part of the signal recognition particle protein translocation system, which is composed of SRP and FtsY. SRP is a ribonucleoprotein composed of Ffh and a 4.5S RNA molecule.

It is found in the cell inner membrane. The protein localises to the cytoplasm. The catalysed reaction is GTP + H2O = GDP + phosphate + H(+). Functionally, involved in targeting and insertion of nascent membrane proteins into the cytoplasmic membrane. Acts as a receptor for the complex formed by the signal recognition particle (SRP) and the ribosome-nascent chain (RNC). Interaction with SRP-RNC leads to the transfer of the RNC complex to the Sec translocase for insertion into the membrane, the hydrolysis of GTP by both Ffh and FtsY, and the dissociation of the SRP-FtsY complex into the individual components. This is Signal recognition particle receptor FtsY from Nitratidesulfovibrio vulgaris (strain ATCC 29579 / DSM 644 / CCUG 34227 / NCIMB 8303 / VKM B-1760 / Hildenborough) (Desulfovibrio vulgaris).